A 409-amino-acid chain; its full sequence is Bone morphogenetic protein 4 (409 aa).

The N-terminal stretch at 1–24 is a signal peptide; sequence MIPGNRMLMVVLLCQVLLGGASHA. A propeptide spanning residues 25 to 293 is cleaved from the precursor; that stretch reads SLIPETGKKK…ALTRRRRAKR (269 aa). Serine 91 carries the post-translational modification Phosphoserine. Residues asparagine 144 and asparagine 209 are each glycosylated (N-linked (GlcNAc...) asparagine). The tract at residues 284–308 is disordered; that stretch reads ALTRRRRAKRSPKHHPQRARKKNKN. Disulfide bonds link cysteine 309-cysteine 374, cysteine 338-cysteine 406, and cysteine 342-cysteine 408. N-linked (GlcNAc...) asparagine glycans are attached at residues asparagine 351 and asparagine 366.

The protein belongs to the TGF-beta family. As to quaternary structure, homodimer; disulfide-linked. Interacts with GREM2. Part of a complex consisting of TWSG1 and CHRD. Interacts with the serine proteases, HTRA1 and HTRA3; the interaction with either inhibits BMP4-mediated signaling. The HTRA protease activity is required for this inhibition. Interacts with SOSTDC1. Interacts with FBN1 (via N-terminal domain) and FBN2. Interacts with type I receptor BMPR1A. Interacts with type II receptor BMPR2. Interacts with FSTL1; this interaction inhibits the activation of the BMP4/Smad1/5/8 signaling pathway. Interacts with SCUBE3. Interacts with TGFBR3.

Its subcellular location is the secreted. The protein resides in the extracellular space. It is found in the extracellular matrix. In terms of biological role, growth factor of the TGF-beta superfamily that plays essential roles in many developmental processes, including neurogenesis, vascular development, angiogenesis and osteogenesis. Acts in concert with PTHLH/PTHRP to stimulate ductal outgrowth during embryonic mammary development and to inhibit hair follicle induction. Initiates the canonical BMP signaling cascade by associating with type I receptor BMPR1A and type II receptor BMPR2. Once all three components are bound together in a complex at the cell surface, BMPR2 phosphorylates and activates BMPR1A. In turn, BMPR1A propagates signal by phosphorylating SMAD1/5/8 that travel to the nucleus and act as activators and repressors of transcription of target genes. Positively regulates the expression of odontogenic development regulator MSX1 via inducing the IPO7-mediated import of SMAD1 to the nucleus. Required for MSX1-mediated mesenchymal molar tooth bud development beyond the bud stage, via promoting Wnt signaling. Acts as a positive regulator of odontoblast differentiation during mesenchymal tooth germ formation, expression is repressed during the bell stage by MSX1-mediated inhibition of CTNNB1 signaling. Able to induce its own expression in dental mesenchymal cells and also in the neighboring dental epithelial cells via an MSX1-mediated pathway. Can also signal through non-canonical BMP pathways such as ERK/MAP kinase, PI3K/Akt, or SRC cascades. For example, induces SRC phosphorylation which, in turn, activates VEGFR2, leading to an angiogenic response. The sequence is that of Bone morphogenetic protein 4 from Bos taurus (Bovine).